Here is a 102-residue protein sequence, read N- to C-terminus: Large ribosomal subunit protein bL21 (102 aa).

The protein belongs to the bacterial ribosomal protein bL21 family. In terms of assembly, part of the 50S ribosomal subunit. Contacts protein L20.

Its function is as follows. This protein binds to 23S rRNA in the presence of protein L20. In Geobacter sp. (strain M21), this protein is Large ribosomal subunit protein bL21.